Consider the following 194-residue polypeptide: MQAVRNAGSRFLRSWTWPQTAGRVVARTPAGTICTGARQLQDAAAKQKVEQNAAPSHTKFSIYPPIPGEESSLRWAGKKFEEIPIAHIKASHNNTQIQVVSASNEPLAFASCGTEGFRNAKKGTGIAAQTAGIAAAARAKQKGVIHIRVVVKGLGPGRLSAMHGLIMGGLEVISITDNTPIPHNGCRPRKARKL.

The protein belongs to the universal ribosomal protein uS11 family. In terms of assembly, component of the mitochondrial small ribosomal subunit (mt-SSU). Mature mammalian 55S mitochondrial ribosomes consist of a small (28S) and a large (39S) subunit. The 28S small subunit contains a 12S ribosomal RNA (12S mt-rRNA) and 30 different proteins. The 39S large subunit contains a 16S rRNA (16S mt-rRNA), a copy of mitochondrial valine transfer RNA (mt-tRNA(Val)), which plays an integral structural role, and 52 different proteins.

Its subcellular location is the mitochondrion. The chain is Small ribosomal subunit protein uS11m (MRPS11) from Homo sapiens (Human).